The sequence spans 176 residues: ATP-dependent protease subunit HslV (176 aa).

Residue threonine 2 is part of the active site. The Na(+) site is built by glycine 157, cysteine 160, and threonine 163.

Belongs to the peptidase T1B family. HslV subfamily. As to quaternary structure, a double ring-shaped homohexamer of HslV is capped on each side by a ring-shaped HslU homohexamer. The assembly of the HslU/HslV complex is dependent on binding of ATP.

It localises to the cytoplasm. The catalysed reaction is ATP-dependent cleavage of peptide bonds with broad specificity.. Its activity is regulated as follows. Allosterically activated by HslU binding. Its function is as follows. Protease subunit of a proteasome-like degradation complex believed to be a general protein degrading machinery. The sequence is that of ATP-dependent protease subunit HslV from Marinobacter nauticus (strain ATCC 700491 / DSM 11845 / VT8) (Marinobacter aquaeolei).